A 310-amino-acid polypeptide reads, in one-letter code: Probable deoxyhypusine synthase (310 aa).

K284 acts as the Nucleophile in catalysis.

It belongs to the deoxyhypusine synthase family. NAD(+) serves as cofactor.

It carries out the reaction [eIF5A protein]-L-lysine + spermidine = [eIF5A protein]-deoxyhypusine + propane-1,3-diamine. Its pathway is protein modification; eIF5A hypusination. Catalyzes the NAD-dependent oxidative cleavage of spermidine and the subsequent transfer of the butylamine moiety of spermidine to the epsilon-amino group of a specific lysine residue of the eIF-5A precursor protein to form the intermediate deoxyhypusine residue. This is Probable deoxyhypusine synthase (dys) from Thermoplasma acidophilum (strain ATCC 25905 / DSM 1728 / JCM 9062 / NBRC 15155 / AMRC-C165).